We begin with the raw amino-acid sequence, 218 residues long: Cytochrome b6 (218 aa).

A helical membrane pass occupies residues 35 to 55 (IFYCLGGITLVCFLIQFATGF). Heme c is bound at residue C38. Heme b is bound by residues H89 and H103. The next 3 helical transmembrane spans lie at 93–113 (ASMMVLMLILHVFRVYLTGGF), 119–139 (LTWVTGVTMAVITVSFGVTGY), and 189–209 (LHTFVMPWLLAVFMLMHFLMI). Residues H190 and H205 each contribute to the heme b site.

It belongs to the cytochrome b family. PetB subfamily. The 4 large subunits of the cytochrome b6-f complex are cytochrome b6, subunit IV (17 kDa polypeptide, PetD), cytochrome f and the Rieske protein, while the 4 small subunits are PetG, PetL, PetM and PetN. The complex functions as a dimer. The cofactor is heme b. Heme c is required as a cofactor.

Its subcellular location is the cellular thylakoid membrane. In terms of biological role, component of the cytochrome b6-f complex, which mediates electron transfer between photosystem II (PSII) and photosystem I (PSI), cyclic electron flow around PSI, and state transitions. The polypeptide is Cytochrome b6 (Synechococcus sp. (strain CC9902)).